The sequence spans 154 residues: 6,7-dimethyl-8-ribityllumazine synthase (154 aa).

5-amino-6-(D-ribitylamino)uracil-binding positions include Phe23, 57–59 (AYE), and 81–83 (AVI). Position 86-87 (86-87 (GT)) interacts with (2S)-2-hydroxy-3-oxobutyl phosphate. Residue His89 is the Proton donor of the active site. Residue Phe114 coordinates 5-amino-6-(D-ribitylamino)uracil. A (2S)-2-hydroxy-3-oxobutyl phosphate-binding site is contributed by Arg128.

The protein belongs to the DMRL synthase family. As to quaternary structure, forms an icosahedral capsid composed of 60 subunits, arranged as a dodecamer of pentamers.

The catalysed reaction is (2S)-2-hydroxy-3-oxobutyl phosphate + 5-amino-6-(D-ribitylamino)uracil = 6,7-dimethyl-8-(1-D-ribityl)lumazine + phosphate + 2 H2O + H(+). It participates in cofactor biosynthesis; riboflavin biosynthesis; riboflavin from 2-hydroxy-3-oxobutyl phosphate and 5-amino-6-(D-ribitylamino)uracil: step 1/2. In terms of biological role, catalyzes the formation of 6,7-dimethyl-8-ribityllumazine by condensation of 5-amino-6-(D-ribitylamino)uracil with 3,4-dihydroxy-2-butanone 4-phosphate. This is the penultimate step in the biosynthesis of riboflavin. In Acidithiobacillus ferrooxidans (strain ATCC 23270 / DSM 14882 / CIP 104768 / NCIMB 8455) (Ferrobacillus ferrooxidans (strain ATCC 23270)), this protein is 6,7-dimethyl-8-ribityllumazine synthase.